Here is a 75-residue protein sequence, read N- to C-terminus: Tautomerase PptA (75 aa).

The Proton acceptor; via imino nitrogen role is filled by P2.

Belongs to the 4-oxalocrotonate tautomerase family. PptA subfamily. Homodimer.

The protein localises to the cytoplasm. The protein is Tautomerase PptA of Klebsiella pneumoniae (strain 342).